Here is a 690-residue protein sequence, read N- to C-terminus: Amino-acid acetyltransferase, mitochondrial (690 aa).

Residues 62–93 (RFPSVKKPKPPIPRQNQGAVETQSGKENEKPG) form a disordered region. Positions 75-84 (RQNQGAVETQ) are enriched in polar residues. Positions 508–679 (DGHHLTLDDP…DYEAVCRSIQ (172 aa)) constitute an N-acetyltransferase domain.

The protein belongs to the acetyltransferase family.

It is found in the mitochondrion. The catalysed reaction is L-glutamate + acetyl-CoA = N-acetyl-L-glutamate + CoA + H(+). It functions in the pathway amino-acid biosynthesis; L-arginine biosynthesis; N(2)-acetyl-L-ornithine from L-glutamate: step 1/4. Its function is as follows. N-acetylglutamate synthase involved in arginine biosynthesis. The sequence is that of Amino-acid acetyltransferase, mitochondrial (arg2) from Talaromyces stipitatus (strain ATCC 10500 / CBS 375.48 / QM 6759 / NRRL 1006) (Penicillium stipitatum).